The chain runs to 363 residues: 3-isopropylmalate dehydrogenase (363 aa).

An NAD(+)-binding site is contributed by Gly-78 to Glu-91. The substrate site is built by Arg-99, Arg-109, Arg-138, and Asp-227. Positions 227, 251, and 255 each coordinate Mg(2+). Gly-285–Asn-297 lines the NAD(+) pocket.

It belongs to the isocitrate and isopropylmalate dehydrogenases family. LeuB type 1 subfamily. In terms of assembly, homodimer. It depends on Mg(2+) as a cofactor. The cofactor is Mn(2+).

It localises to the cytoplasm. The enzyme catalyses (2R,3S)-3-isopropylmalate + NAD(+) = 4-methyl-2-oxopentanoate + CO2 + NADH. Its pathway is amino-acid biosynthesis; L-leucine biosynthesis; L-leucine from 3-methyl-2-oxobutanoate: step 3/4. Its function is as follows. Catalyzes the oxidation of 3-carboxy-2-hydroxy-4-methylpentanoate (3-isopropylmalate) to 3-carboxy-4-methyl-2-oxopentanoate. The product decarboxylates to 4-methyl-2 oxopentanoate. The protein is 3-isopropylmalate dehydrogenase of Salmonella typhi.